We begin with the raw amino-acid sequence, 248 residues long: Aspartate/glutamate leucyltransferase (248 aa).

This sequence belongs to the R-transferase family. Bpt subfamily.

The protein resides in the cytoplasm. It carries out the reaction N-terminal L-glutamyl-[protein] + L-leucyl-tRNA(Leu) = N-terminal L-leucyl-L-glutamyl-[protein] + tRNA(Leu) + H(+). The catalysed reaction is N-terminal L-aspartyl-[protein] + L-leucyl-tRNA(Leu) = N-terminal L-leucyl-L-aspartyl-[protein] + tRNA(Leu) + H(+). In terms of biological role, functions in the N-end rule pathway of protein degradation where it conjugates Leu from its aminoacyl-tRNA to the N-termini of proteins containing an N-terminal aspartate or glutamate. In Methylorubrum extorquens (strain PA1) (Methylobacterium extorquens), this protein is Aspartate/glutamate leucyltransferase.